Reading from the N-terminus, the 1117-residue chain is Rhoptry apical surface protein 3 (1117 aa).

Over residues 1-12 the composition is skewed to polar residues; sequence MENRPRQQTSGH. Disordered stretches follow at residues 1–27, 47–243, 258–301, 325–398, 415–442, 490–572, 600–619, and 654–736; these read MENR…SRPG, NHER…SHFT, DSER…NKGI, SDFK…SLST, WNHA…FLAA, AEAV…ESEL, RPLL…ELRS, and QDGT…RLQG. Composition is skewed to basic and acidic residues over residues 83-100, 197-209, and 275-300; these read DSNH…DSQK, TPLR…RHVS, and MKPK…DNKG. Low complexity-rich tracts occupy residues 418-442 and 490-508; these read ASPG…FLAA and AEAV…GDSS. Basic and acidic residues predominate over residues 510–520; the sequence is ESDHSGRERSR. Positions 530 to 540 are enriched in polar residues; that stretch reads NEITTMRSQRS. A compositionally biased stretch (basic and acidic residues) spans 546–555; that stretch reads FSREPERESD. A compositionally biased stretch (polar residues) spans 557 to 569; sequence GEMTPTGETSGSE. Residues 724–734 show a composition bias toward basic and acidic residues; it reads DADRKQEEKRL. The 37-residue stretch at 752-788 folds into the BSD domain; the sequence is MLSVDRRLRKLHSDTAVRRMGETEFWKLYFYQVFLLM. The segment covering 829–838 has biased composition (polar residues); sequence QTSGFTESDT. Disordered stretches follow at residues 829–848, 858–891, 909–964, 1031–1066, and 1095–1117; these read QTSG…YGFA, IIPP…APEQ, RSPS…GDSP, SSSQ…PSHL, and GTCG…GARA. The segment covering 839 to 848 has biased composition (low complexity); sequence SSPSPSYGFA. The span at 909 to 931 shows a compositional bias: low complexity; it reads RSPSLSSSSSGTTSVSARGTGSS. Polar residues predominate over residues 1031 to 1044; it reads SSSQVNGRVSTSRG. 2 stretches are compositionally biased toward basic and acidic residues: residues 1046–1062 and 1108–1117; these read MGED…RLEG and KGKEVQGARA.

In terms of assembly, interacts with RASP2.

The protein localises to the cytoplasmic vesicle. Its subcellular location is the secretory vesicle. The protein resides in the rhoptry membrane. The chain is Rhoptry apical surface protein 3 from Toxoplasma gondii (strain ATCC 50853 / GT1).